A 217-amino-acid chain; its full sequence is Probable GTP-binding protein EngB (217 aa).

In terms of domain architecture, EngB-type G spans 32–205 (GTPQIAFAGR…RKIVYSLIET (174 aa)). GTP contacts are provided by residues 40–47 (GRSNAGKS), 67–71 (GKTKL), 85–88 (DLPG), 152–155 (TKID), and 184–186 (VSN). Mg(2+) contacts are provided by Ser-47 and Thr-69.

It belongs to the TRAFAC class TrmE-Era-EngA-EngB-Septin-like GTPase superfamily. EngB GTPase family. Mg(2+) is required as a cofactor.

Necessary for normal cell division and for the maintenance of normal septation. The sequence is that of Probable GTP-binding protein EngB from Leptospira interrogans serogroup Icterohaemorrhagiae serovar copenhageni (strain Fiocruz L1-130).